We begin with the raw amino-acid sequence, 566 residues long: Hemocyanin B chain (566 aa).

A disulfide bridge links C82 with C87. Cu cation is bound by residues H183, H187, H213, H309, H313, and H347.

It belongs to the tyrosinase family. Hemocyanin subfamily. As to expression, hemolymph.

It is found in the secreted. It localises to the extracellular space. Functionally, hemocyanins are copper-containing oxygen carriers occurring freely dissolved in the hemolymph of many mollusks and arthropods. The protein is Hemocyanin B chain of Astacus leptodactylus (Turkish narrow-clawed crayfish).